The primary structure comprises 366 residues: Mannonate dehydratase (366 aa).

This sequence belongs to the mannonate dehydratase family. It depends on Fe(2+) as a cofactor. Mn(2+) serves as cofactor.

The catalysed reaction is D-mannonate = 2-dehydro-3-deoxy-D-gluconate + H2O. Its pathway is carbohydrate metabolism; pentose and glucuronate interconversion. Its function is as follows. Catalyzes the dehydration of D-mannonate. The chain is Mannonate dehydratase from Streptococcus suis (strain 98HAH33).